A 225-amino-acid polypeptide reads, in one-letter code: Cytidylate kinase (225 aa).

Residue 11-19 (GPAAAGKST) participates in ATP binding.

Belongs to the cytidylate kinase family. Type 1 subfamily.

It is found in the cytoplasm. The catalysed reaction is CMP + ATP = CDP + ADP. It carries out the reaction dCMP + ATP = dCDP + ADP. This Bacillus cereus (strain ATCC 10987 / NRS 248) protein is Cytidylate kinase.